The sequence spans 352 residues: Ion-translocating oxidoreductase complex subunit D (352 aa).

5 helical membrane-spanning segments follow: residues 20–40, 42–62, 78–109, 123–143, and 148–168; these read IMLL…WFFG, GTLV…ALVL, ALLT…VIIA, PAMI…TSWL, and IAVN…GHTA. Thr187 bears the FMN phosphoryl threonine mark. The next 5 helical transmembrane spans lie at 214 to 234, 242 to 262, 267 to 287, 301 to 321, and 322 to 342; these read ILAG…GVWL, WHIP…GWLF, LAAP…FFIL, LIFG…GGYP, and DGVA…DYYT.

The protein belongs to the NqrB/RnfD family. The complex is composed of six subunits: RsxA, RsxB, RsxC, RsxD, RsxE and RsxG. It depends on FMN as a cofactor.

The protein resides in the cell inner membrane. Part of a membrane-bound complex that couples electron transfer with translocation of ions across the membrane. Required to maintain the reduced state of SoxR. This is Ion-translocating oxidoreductase complex subunit D from Escherichia coli O6:K15:H31 (strain 536 / UPEC).